Here is a 469-residue protein sequence, read N- to C-terminus: Phosphoenolpyruvate carboxylase (469 aa).

It belongs to the PEPCase type 2 family. In terms of assembly, homotetramer. Requires Mg(2+) as cofactor.

The enzyme catalyses oxaloacetate + phosphate = phosphoenolpyruvate + hydrogencarbonate. Its function is as follows. Catalyzes the irreversible beta-carboxylation of phosphoenolpyruvate (PEP) to form oxaloacetate (OAA), a four-carbon dicarboxylic acid source for the tricarboxylic acid cycle. This is Phosphoenolpyruvate carboxylase from Pyrococcus abyssi (strain GE5 / Orsay).